A 119-amino-acid chain; its full sequence is Lamprin 1.8-10 (119 aa).

The N-terminal stretch at 1–19 is a signal peptide; the sequence is MAATMQALLVIALLHLATA. 7 consecutive repeat copies span residues 41 to 45, 46 to 50, 51 to 55, 56 to 60, 61 to 65, 66 to 70, and 86 to 90. The interval 41 to 90 is 7 X 5 AA approximate repeats; it reads GGLGYGGLGYGGLGYGGLGVAGLGYGGLGYPGAALGGAYTHHAALGGLGY.

In terms of assembly, the polymeric lamprin chains self-aggregate to form fibers and have secondary structures particularly rich in beta-sheets and in beta-turns.

It localises to the secreted. The protein localises to the extracellular space. Its subcellular location is the extracellular matrix. In terms of biological role, self-aggregating protein that is part of the soluble form of lamprin. This chain is Lamprin 1.8-10, found in Petromyzon marinus (Sea lamprey).